A 210-amino-acid chain; its full sequence is Na(+)-translocating NADH-quinone reductase subunit D (210 aa).

5 consecutive transmembrane segments (helical) span residues 42-62, 72-92, 103-123, 131-151, and 178-198; these read FVMT…VSLI, IIVQ…VLKA, VFVG…AFAM, LIDG…VGFF, and NGLM…IWVI.

Belongs to the NqrDE/RnfAE family. As to quaternary structure, composed of six subunits; NqrA, NqrB, NqrC, NqrD, NqrE and NqrF.

The protein resides in the cell inner membrane. It catalyses the reaction a ubiquinone + n Na(+)(in) + NADH + H(+) = a ubiquinol + n Na(+)(out) + NAD(+). Functionally, NQR complex catalyzes the reduction of ubiquinone-1 to ubiquinol by two successive reactions, coupled with the transport of Na(+) ions from the cytoplasm to the periplasm. NqrA to NqrE are probably involved in the second step, the conversion of ubisemiquinone to ubiquinol. The polypeptide is Na(+)-translocating NADH-quinone reductase subunit D (Vibrio parahaemolyticus serotype O3:K6 (strain RIMD 2210633)).